The sequence spans 598 residues: UvrABC system protein C (598 aa).

One can recognise a GIY-YIG domain in the interval 14–91 (DSPGCYLHKD…IQKNMPKYNI (78 aa)). Residues 196–231 (DKIIEDLRSKMLAASEEMAFERAAEYRDLISGIATM) form the UVR domain.

The protein belongs to the UvrC family. In terms of assembly, interacts with UvrB in an incision complex.

The protein resides in the cytoplasm. In terms of biological role, the UvrABC repair system catalyzes the recognition and processing of DNA lesions. UvrC both incises the 5' and 3' sides of the lesion. The N-terminal half is responsible for the 3' incision and the C-terminal half is responsible for the 5' incision. This chain is UvrABC system protein C, found in Streptococcus pyogenes serotype M6 (strain ATCC BAA-946 / MGAS10394).